The chain runs to 524 residues: MAVYYPNSVGMQSLYQESIYLNEQQQQQQQASSSSAASFSEIVSGDVRNNEMVFIPPTSDVAVNGNVTVSSNDLSFHGGGLSLSLGNQIQSAVSVSPFQYHYQNLSNQLSYNNLNPSTMSDENGKSLSVHQHHSDQILPSSVYNNNGNNGVGFYNNYRYETSGFVSSVLRSRYLKPTQQLLDEVVSVRKDLKLGNKKMKNDKGQDFHNGSSDNITEDDKSQSQELSPSERQELQSKKSKLLTMVDEVDKRYNQYHHQMEALASSFEMVTGLGAAKPYTSVALNRISRHFRCLRDAIKEQIQVIRGKLGERETSDEQGERIPRLRYLDQRLRQQRALHQQLGMVRPAWRPQRGLPENSVSILRAWLFEHFLHPYPKESEKIMLSKQTGLSKNQVANWFINARVRLWKPMIEEMYKEEFGESAELLSNSNQDTKKMQETSQLKHEDSSSSQQQNQGNNNNNIPYTSDAEQNLVFADPKPDRATTGDYDSLMNYHGFGIDDYNRYVGLGNQQDGRYSNPHQLHDFVV.

The interval 171-187 (SRYLKPTQQLLDEVVSV) is SR/KY domain. Composition is skewed to basic and acidic residues over residues 195–205 (NKKMKNDKGQD) and 216–235 (EDDK…ELQS). Residues 195 to 236 (NKKMKNDKGQDFHNGSSDNITEDDKSQSQELSPSERQELQSK) are disordered. The tract at residues 229–300 (ERQELQSKKS…CLRDAIKEQI (72 aa)) is BELL domain. A DNA-binding region (homeobox) is located at residues 346 to 408 (AWRPQRGLPE…NARVRLWKPM (63 aa)). The interval 429–463 (QDTKKMQETSQLKHEDSSSSQQQNQGNNNNNIPYT) is disordered. The segment covering 430–445 (DTKKMQETSQLKHEDS) has biased composition (basic and acidic residues). Low complexity predominate over residues 446-459 (SSSQQQNQGNNNNN).

The protein belongs to the TALE/BELL homeobox family. May form heterodimeric complex with the TALE/KNOX protein STM. Interacts with OFP1, OFP2, OFP3, OFP4, OFP5 and OFP15.

The protein localises to the nucleus. Its function is as follows. Transcription factor that is responsive of the nuclear import of SHOOT MERISTEMLESS (STM). In Arabidopsis thaliana (Mouse-ear cress), this protein is BEL1-like homeodomain protein 3 (BLH3).